Here is a 301-residue protein sequence, read N- to C-terminus: ATP synthase gamma chain (301 aa).

Belongs to the ATPase gamma chain family. In terms of assembly, F-type ATPases have 2 components, CF(1) - the catalytic core - and CF(0) - the membrane proton channel. CF(1) has five subunits: alpha(3), beta(3), gamma(1), delta(1), epsilon(1). CF(0) has three main subunits: a, b and c.

The protein localises to the cell inner membrane. Its function is as follows. Produces ATP from ADP in the presence of a proton gradient across the membrane. The gamma chain is believed to be important in regulating ATPase activity and the flow of protons through the CF(0) complex. The sequence is that of ATP synthase gamma chain from Bordetella avium (strain 197N).